The primary structure comprises 131 residues: Large-conductance mechanosensitive channel (131 aa).

3 consecutive transmembrane segments (helical) span residues 14–34 (IMDL…VTSL), 38–58 (IIMP…LAVT), and 67–87 (GSFI…FIVI).

This sequence belongs to the MscL family. Homopentamer.

It localises to the cell membrane. Channel that opens in response to stretch forces in the membrane lipid bilayer. May participate in the regulation of osmotic pressure changes within the cell. The sequence is that of Large-conductance mechanosensitive channel from Bacillus velezensis (strain DSM 23117 / BGSC 10A6 / LMG 26770 / FZB42) (Bacillus amyloliquefaciens subsp. plantarum).